The primary structure comprises 479 residues: MSMDVGVVGLGVMGANLALNIAEKGFKVAVFNRTYSKSEEFMKANASAPFAGNLKAFETMEAFAASLKKPRKALILVQAGAATDSTTEQLKKVFEKGDILVDTGNAHFKDQGRRAQQLEAAGLRFLGMGISGGEEGARKGPAFFPGGTLSVWEEIRPIVEAAAAKADDGRPCVTMNGSGGAGSCVKMYHNSGEYAILQIWGEVFDILRAMGLNNDEVAAVLEDWKSKNFLKSYMLDISIAAARAKDKDGSYLTEHVMDRIGSKGTGLWSAQEALEIGVPAPSLNMAVVSRQFTMYKTERQANASNAPGITQSPGYTLKNKSPSGPEIKQLYDSVCIAIISCYAQMFQCLREMDKVHNFGLNLPATIATFRAGCILQGYLLKPMTEAFEKNPNISNLMCAFQTEIRAGLQNYRDMVALITSKLEVSIPVLSASLNYVTAMFTPTLKYGQLVSLQRDVFGRHGYERVDKDGRESFQWPELQ.

Residues 9 to 14 (GLGVMG), 32 to 34 (NRT), 77 to 79 (VQA), and N105 each bind NADP(+). Residues N105 and 131 to 133 (SGG) contribute to the substrate site. The active-site Proton acceptor is K186. 189 to 190 (HN) contacts substrate. The Proton donor role is filled by E193. 5 residues coordinate substrate: Y194, K263, R290, R454, and H460.

This sequence belongs to the 6-phosphogluconate dehydrogenase family. In terms of assembly, homodimer.

It carries out the reaction 6-phospho-D-gluconate + NADP(+) = D-ribulose 5-phosphate + CO2 + NADPH. The protein operates within carbohydrate degradation; pentose phosphate pathway; D-ribulose 5-phosphate from D-glucose 6-phosphate (oxidative stage): step 3/3. Catalyzes the oxidative decarboxylation of 6-phosphogluconate to ribulose 5-phosphate and CO(2), with concomitant reduction of NADP to NADPH. The protein is 6-phosphogluconate dehydrogenase, decarboxylating (GND) of Trypanosoma brucei brucei.